Here is a 456-residue protein sequence, read N- to C-terminus: tRNA modification GTPase MnmE (456 aa).

Residues Arg26, Glu86, and Arg125 each coordinate (6S)-5-formyl-5,6,7,8-tetrahydrofolate. The region spanning 222-376 is the TrmE-type G domain; that stretch reads GLSTAIIGRP…IEDRINQLFF (155 aa). Asn232 lines the K(+) pocket. GTP is bound by residues 232–237, 251–257, and 276–279; these read NVGKSS, TDIEGTT, and DTAG. Ser236 is a binding site for Mg(2+). K(+) is bound by residues Thr251, Ile253, and Thr256. Thr257 contributes to the Mg(2+) binding site. A (6S)-5-formyl-5,6,7,8-tetrahydrofolate-binding site is contributed by Lys456.

The protein belongs to the TRAFAC class TrmE-Era-EngA-EngB-Septin-like GTPase superfamily. TrmE GTPase family. As to quaternary structure, homodimer. Heterotetramer of two MnmE and two MnmG subunits. K(+) serves as cofactor.

It localises to the cytoplasm. Its function is as follows. Exhibits a very high intrinsic GTPase hydrolysis rate. Involved in the addition of a carboxymethylaminomethyl (cmnm) group at the wobble position (U34) of certain tRNAs, forming tRNA-cmnm(5)s(2)U34. This is tRNA modification GTPase MnmE from Streptococcus thermophilus (strain CNRZ 1066).